We begin with the raw amino-acid sequence, 207 residues long: Suppressor of IKBKE 1 (207 aa).

2 coiled-coil regions span residues 70 to 102 (HILL…DALE) and 162 to 193 (QFCK…SLQA).

The protein belongs to the SIKE family. Interacts with IKBKE and TBK1 via its coiled coil region. Interaction with TBK1 is disrupted upon viral infection or TLR3 stimulation. Interacts with CDC42BPB. Interacts with SIKE1 which mediates association with the STRIPAK core complex composed of PP2A catalytic and scaffolding subunits, the striatins (PP2A regulatory subunits), the striatin-associated proteins MOB4, STRIP1 and STRIP2, PDCD10 and members of the STE20 kinases, such as STK24 and STK26. As to expression, widely expressed. Expressed in brain, heart, skeletal muscle, colon, thymus, spleen, kidney, liver, small intestine, placenta, lung and leukocytes. Present in all cell lines tested (at protein level).

Its subcellular location is the cytoplasm. Functionally, physiological suppressor of IKK-epsilon and TBK1 that plays an inhibitory role in virus- and TLR3-triggered IRF3. Inhibits TLR3-mediated activation of interferon-stimulated response elements (ISRE) and the IFN-beta promoter. May act by disrupting the interactions of IKBKE or TBK1 with TICAM1/TRIF, IRF3 and RIGI. Does not inhibit NF-kappa-B activation pathways. Associates with the striatin-interacting phosphatase and kinase (STRIPAK) core complex, forming the extended (SIKE1:SLMAP)STRIPAK complex. The (SIKE1:SLMAP)STRIPAK complex dephosphorylates STK3 leading to the inhibition of Hippo signaling and the control of cell growth. This Homo sapiens (Human) protein is Suppressor of IKBKE 1.